The chain runs to 519 residues: Ribonuclease Y (519 aa).

The helical transmembrane segment at P3–V23 threads the bilayer. The KH domain occupies T209 to L272. One can recognise an HD domain in the interval V335–A428.

The protein belongs to the RNase Y family.

Its subcellular location is the cell membrane. Functionally, endoribonuclease that initiates mRNA decay. This chain is Ribonuclease Y, found in Bacillus velezensis (strain DSM 23117 / BGSC 10A6 / LMG 26770 / FZB42) (Bacillus amyloliquefaciens subsp. plantarum).